A 495-amino-acid polypeptide reads, in one-letter code: Potassium voltage-gated channel subfamily A member 1 (495 aa).

The segment at 1–30 (MTVMSGENADEASAAPGHPQDGSYPRQADH) is disordered. The tract at residues 1 to 128 (MTVMSGENAD…FYELGEEAME (128 aa)) is tetramerization domain. The Cytoplasmic portion of the chain corresponds to 1 to 164 (MTVMSGENAD…LLFEYPESSG (164 aa)). The residue at position 23 (serine 23) is a Phosphoserine. Residues 165–186 (PARVIAIVSVMVILISIVIFCL) traverse the membrane as a helical segment. Over 187-220 (ETLPELKDDKDFTGTIHRIDNTTVIYTSNIFTDP) the chain is Extracellular. Asparagine 207 carries an N-linked (GlcNAc...) asparagine glycan. The helical transmembrane segment at 221–242 (FFIVETLCIIWFSFELVVRFFA) threads the bilayer. A lipid anchor (S-palmitoyl cysteine) is attached at cysteine 243. Topologically, residues 243–253 (CPSKTDFFKNI) are cytoplasmic. The helical transmembrane segment at 254–274 (MNFIDIVAIIPYFITLGTEIA) threads the bilayer. At 275 to 287 (EQEGNQKGEQATS) the chain is on the extracellular side. The helical; Voltage-sensor transmembrane segment at 288–308 (LAILRVIRLVRVFRIFKLSRH) threads the bilayer. The Cytoplasmic portion of the chain corresponds to 309-323 (SKGLQILGQTLKASM). Positions 310 to 323 (KGLQILGQTLKASM) are S4-S5 linker. Serine 322 carries the phosphoserine; by PKA modification. A helical transmembrane segment spans residues 324–345 (RELGLLIFFLFIGVILFSSAVY). The Extracellular segment spans residues 346–359 (FAEAEEAESHFSSI). An intramembrane region (helical) is located at residues 360–371 (PDAFWWAVVSMT). A Selectivity filter motif is present at residues 372–377 (TVGYGD). Residues 372 to 379 (TVGYGDMY) lie within the membrane without spanning it. Residues 380–386 (PVTIGGK) are Extracellular-facing. The chain crosses the membrane as a helical span at residues 387–415 (IVGSLCAIAGVLTIALPVPVIVSNFNYFY). Residues 416–495 (HRETEGEEQA…VNKSKLLTDV (80 aa)) lie on the Cytoplasmic side of the membrane. Serine 437 and serine 439 each carry phosphoserine. Serine 446 is subject to Phosphoserine; by PKA. Positions 493 to 495 (TDV) match the PDZ-binding motif.

It belongs to the potassium channel family. A (Shaker) (TC 1.A.1.2) subfamily. Kv1.1/KCNA1 sub-subfamily. In terms of assembly, homotetramer and heterotetramer with other channel-forming alpha subunits, such as KCNA2, KCNA4, KCNA5, KCNA6 and KCNA7. Channel activity is regulated by interaction with the beta subunits KCNAB1 and KCNAB2. Identified in a complex with KCNA2 and KCNAB2. Interacts (via C-terminus) with the PDZ domains of DLG1, DLG2 and DLG4. Interacts with LGI1 within a complex containing LGI1, KCNA4 and KCNAB1. Interacts (via cytoplasmic N-terminal domain) with KCNRG; this inhibits channel activity. Interacts with ANK3; this inhibits channel activity. Interacts (via N-terminus) with STX1A; this promotes channel inactivation. Interacts (via N-terminus) with the heterodimer formed by GNB1 and GNG2; this promotes channel inactivation. Can interact simultaneously with STX1A and the heterodimer formed by GNB1 and GNG2. Interacts with ADAM11. In terms of processing, palmitoylated on Cys-243; which may be required for membrane targeting. Post-translationally, N-glycosylated. Phosphorylated on tyrosine residues. Phosphorylation increases in response to NRG1; this inhibits channel activity. Phosphorylated by PKA. Phosphorylation at Ser-446 regulates channel activity by down-regulating expression at the cell membrane. Detected in hippocampus, in the middle third of the molecular layer of the dentate gyrus and in stratum radiatum and stratum oriens. Detected in the mossy fiber zone in the hippocampus CA3 region, at or near axon terminals. Detected in brain cortex, at basket cell terminals. Detected adjacent to nodes of Ranvier in juxtaparanodal zones in spinal cord nerve fibers, but also in paranodal regions in some myelinated spinal cord axons. Detected in juxtaparanodal regions adjacent to the nodes of Ranvier in myelinated axons in cerebellar white matter. Detected in sensory neurons. Detected in neurons from the medial nucleus of the trapezoid body. Detected in basolateral amygdala. Detected in the paraventricular nucleus of the hypothalamus. Detected in the islet of Langerhans (at protein level).

Its subcellular location is the cell membrane. The protein resides in the membrane. The protein localises to the cell projection. It localises to the axon. It is found in the cytoplasmic vesicle. Its subcellular location is the perikaryon. The protein resides in the endoplasmic reticulum. The protein localises to the dendrite. It localises to the cell junction. It is found in the synapse. Its subcellular location is the presynapse. The protein resides in the presynaptic cell membrane. The enzyme catalyses K(+)(in) = K(+)(out). Its activity is regulated as follows. Inhibited by 4-aminopyridine (4-AP) and by tetraethylammonium (TEA). Inhibited by kaliotoxin (KTX). Voltage-gated potassium channel that mediates transmembrane potassium transport in excitable membranes, primarily in the brain and the central nervous system, but also in the kidney. Contributes to the regulation of the membrane potential and nerve signaling, and prevents neuronal hyperexcitability. Forms tetrameric potassium-selective channels through which potassium ions pass in accordance with their electrochemical gradient. The channel alternates between opened and closed conformations in response to the voltage difference across the membrane. Can form functional homotetrameric channels and heterotetrameric channels that contain variable proportions of KCNA1, KCNA2, KCNA4, KCNA5, KCNA6, KCNA7, and possibly other family members as well; channel properties depend on the type of alpha subunits that are part of the channel. Channel properties are modulated by cytoplasmic beta subunits that regulate the subcellular location of the alpha subunits and promote rapid inactivation of delayed rectifier potassium channels. In vivo, membranes probably contain a mixture of heteromeric potassium channel complexes, making it difficult to assign currents observed in intact tissues to any particular potassium channel family member. Homotetrameric KCNA1 forms a delayed-rectifier potassium channel that opens in response to membrane depolarization, followed by slow spontaneous channel closure. In contrast, a heterotetrameric channel formed by KCNA1 and KCNA4 shows rapid inactivation. Regulates neuronal excitability in hippocampus, especially in mossy fibers and medial perforant path axons, preventing neuronal hyperexcitability. Response to toxins that are selective for KCNA1, respectively for KCNA2, suggests that heteromeric potassium channels composed of both KCNA1 and KCNA2 play a role in pacemaking and regulate the output of deep cerebellar nuclear neurons. May function as down-stream effector for G protein-coupled receptors and inhibit GABAergic inputs to basolateral amygdala neurons. May contribute to the regulation of neurotransmitter release, such as gamma-aminobutyric acid (GABA) release. Plays a role in regulating the generation of action potentials and preventing hyperexcitability in myelinated axons of the vagus nerve, and thereby contributes to the regulation of heart contraction. Required for normal neuromuscular responses. Regulates the frequency of neuronal action potential firing in response to mechanical stimuli, and plays a role in the perception of pain caused by mechanical stimuli, but does not play a role in the perception of pain due to heat stimuli. Required for normal responses to auditory stimuli and precise location of sound sources, but not for sound perception. The use of toxins that block specific channels suggest that it contributes to the regulation of the axonal release of the neurotransmitter dopamine. Required for normal postnatal brain development and normal proliferation of neuronal precursor cells in the brain. Plays a role in the reabsorption of Mg(2+) in the distal convoluted tubules in the kidney and in magnesium ion homeostasis, probably via its effect on the membrane potential. The chain is Potassium voltage-gated channel subfamily A member 1 from Rattus norvegicus (Rat).